Reading from the N-terminus, the 258-residue chain is Methylthioribulose-1-phosphate dehydratase (258 aa).

Over residues 1–20 the composition is skewed to polar residues; it reads MTPPSNGQAAETNDHLVQSD. The interval 1-21 is disordered; the sequence is MTPPSNGQAAETNDHLVQSDN. Residue Cys-105 participates in substrate binding. Residues His-123 and His-125 each coordinate Zn(2+). Glu-153 (proton donor/acceptor) is an active-site residue. His-210 is a binding site for Zn(2+).

It belongs to the aldolase class II family. MtnB subfamily. The cofactor is Zn(2+).

The protein resides in the cytoplasm. It carries out the reaction 5-(methylsulfanyl)-D-ribulose 1-phosphate = 5-methylsulfanyl-2,3-dioxopentyl phosphate + H2O. It functions in the pathway amino-acid biosynthesis; L-methionine biosynthesis via salvage pathway; L-methionine from S-methyl-5-thio-alpha-D-ribose 1-phosphate: step 2/6. In terms of biological role, catalyzes the dehydration of methylthioribulose-1-phosphate (MTRu-1-P) into 2,3-diketo-5-methylthiopentyl-1-phosphate (DK-MTP-1-P). The sequence is that of Methylthioribulose-1-phosphate dehydratase from Chaetomium globosum (strain ATCC 6205 / CBS 148.51 / DSM 1962 / NBRC 6347 / NRRL 1970) (Soil fungus).